A 114-amino-acid chain; its full sequence is Histone H3-6 (114 aa).

Over residues 1 to 17 (NTGGKAPRKHIAHKQAK) the composition is skewed to basic residues. Residues 1-32 (NTGGKAPRKHIAHKQAKKSSAAAATGGVKKPH) form a disordered region. A compositionally biased stretch (low complexity) spans 18–28 (KSSAAAATGGV).

The protein belongs to the histone H3 family. As to quaternary structure, the nucleosome is a histone octamer containing two molecules each of H2A, H2B, H3 and H4 assembled in one H3-H4 heterotetramer and two H2A-H2B heterodimers. The octamer wraps approximately 147 bp of DNA.

Its subcellular location is the nucleus. It is found in the chromosome. Core component of nucleosome. Nucleosomes wrap and compact DNA into chromatin, limiting DNA accessibility to the cellular machineries which require DNA as a template. Histones thereby play a central role in transcription regulation, DNA repair, DNA replication and chromosomal stability. DNA accessibility is regulated via a complex set of post-translational modifications of histones, also called histone code, and nucleosome remodeling. This Stylonychia lemnae (Ciliate) protein is Histone H3-6 (H3-6).